Consider the following 83-residue polypeptide: uncharacterized protein (83 aa).

The protein belongs to the UPF0440 family.

This is an uncharacterized protein from Natronomonas pharaonis (strain ATCC 35678 / DSM 2160 / CIP 103997 / JCM 8858 / NBRC 14720 / NCIMB 2260 / Gabara) (Halobacterium pharaonis).